The following is a 475-amino-acid chain: UDP-N-acetylmuramate--L-alanine ligase (475 aa).

ATP is bound at residue 125–131 (GTHGKTT).

This sequence belongs to the MurCDEF family.

Its subcellular location is the cytoplasm. It catalyses the reaction UDP-N-acetyl-alpha-D-muramate + L-alanine + ATP = UDP-N-acetyl-alpha-D-muramoyl-L-alanine + ADP + phosphate + H(+). It participates in cell wall biogenesis; peptidoglycan biosynthesis. In terms of biological role, cell wall formation. This is UDP-N-acetylmuramate--L-alanine ligase from Haemophilus influenzae (strain PittGG).